A 359-amino-acid polypeptide reads, in one-letter code: Histidinol-phosphate aminotransferase (359 aa).

K212 bears the N6-(pyridoxal phosphate)lysine mark.

Belongs to the class-II pyridoxal-phosphate-dependent aminotransferase family. Histidinol-phosphate aminotransferase subfamily. As to quaternary structure, homodimer. The cofactor is pyridoxal 5'-phosphate.

It carries out the reaction L-histidinol phosphate + 2-oxoglutarate = 3-(imidazol-4-yl)-2-oxopropyl phosphate + L-glutamate. It functions in the pathway amino-acid biosynthesis; L-histidine biosynthesis; L-histidine from 5-phospho-alpha-D-ribose 1-diphosphate: step 7/9. This is Histidinol-phosphate aminotransferase from Buchnera aphidicola subsp. Melaphis rhois.